Reading from the N-terminus, the 124-residue chain is Large ribosomal subunit protein bL12 (124 aa).

It belongs to the bacterial ribosomal protein bL12 family. In terms of assembly, homodimer. Part of the ribosomal stalk of the 50S ribosomal subunit. Forms a multimeric L10(L12)X complex, where L10 forms an elongated spine to which 2 to 4 L12 dimers bind in a sequential fashion. Binds GTP-bound translation factors.

Its function is as follows. Forms part of the ribosomal stalk which helps the ribosome interact with GTP-bound translation factors. Is thus essential for accurate translation. The chain is Large ribosomal subunit protein bL12 from Bacteroides thetaiotaomicron (strain ATCC 29148 / DSM 2079 / JCM 5827 / CCUG 10774 / NCTC 10582 / VPI-5482 / E50).